The following is a 66-amino-acid chain: Phylloseptin-Az3 (66 aa).

The signal sequence occupies residues 1-22 (MAFLKKSLFLVLFLGLVSLSIC). Residues 23–44 (EEEKRETEEEEYNQEDDDKSEE) constitute a propeptide that is removed on maturation. Phenylalanine amide is present on Phe-65.

Expressed by the skin glands.

It localises to the secreted. Has antimicrobial activity. This chain is Phylloseptin-Az3, found in Pithecopus azureus (Orange-legged monkey tree frog).